The primary structure comprises 115 residues: NADH-ubiquinone oxidoreductase chain 3 (115 aa).

Transmembrane regions (helical) follow at residues 3–23 (LYTVIFINILLSLTLILVAFW), 55–75 (FFLVAITFLLFDLEIALLLPL), and 86–106 (TMMIMAFILVTILSLGLAYEW).

This sequence belongs to the complex I subunit 3 family. Core subunit of respiratory chain NADH dehydrogenase (Complex I) which is composed of 45 different subunits. Interacts with TMEM186. Interacts with TMEM242.

It localises to the mitochondrion inner membrane. It catalyses the reaction a ubiquinone + NADH + 5 H(+)(in) = a ubiquinol + NAD(+) + 4 H(+)(out). In terms of biological role, core subunit of the mitochondrial membrane respiratory chain NADH dehydrogenase (Complex I) which catalyzes electron transfer from NADH through the respiratory chain, using ubiquinone as an electron acceptor. Essential for the catalytic activity of complex I. The protein is NADH-ubiquinone oxidoreductase chain 3 of Mus musculus (Mouse).